The following is a 191-amino-acid chain: Leucyl/phenylalanyl-tRNA--protein transferase (191 aa).

It belongs to the L/F-transferase family.

Its subcellular location is the cytoplasm. It carries out the reaction N-terminal L-lysyl-[protein] + L-leucyl-tRNA(Leu) = N-terminal L-leucyl-L-lysyl-[protein] + tRNA(Leu) + H(+). It catalyses the reaction N-terminal L-arginyl-[protein] + L-leucyl-tRNA(Leu) = N-terminal L-leucyl-L-arginyl-[protein] + tRNA(Leu) + H(+). The catalysed reaction is L-phenylalanyl-tRNA(Phe) + an N-terminal L-alpha-aminoacyl-[protein] = an N-terminal L-phenylalanyl-L-alpha-aminoacyl-[protein] + tRNA(Phe). Its function is as follows. Functions in the N-end rule pathway of protein degradation where it conjugates Leu, Phe and, less efficiently, Met from aminoacyl-tRNAs to the N-termini of proteins containing an N-terminal arginine or lysine. This chain is Leucyl/phenylalanyl-tRNA--protein transferase, found in Nostoc sp. (strain PCC 7120 / SAG 25.82 / UTEX 2576).